A 523-amino-acid chain; its full sequence is 2-isopropylmalate synthase (523 aa).

Positions 5–267 (VIIFDTTLRD…HTAINHQEIW (263 aa)) constitute a Pyruvate carboxyltransferase domain. Residues Asp14, His202, His204, and Asn238 each coordinate Mn(2+). Residues 392–523 (RLDYFSVQSG…QHNENNKETV (132 aa)) form a regulatory domain region.

This sequence belongs to the alpha-IPM synthase/homocitrate synthase family. LeuA type 1 subfamily. In terms of assembly, homodimer. The cofactor is Mn(2+).

Its subcellular location is the cytoplasm. It catalyses the reaction 3-methyl-2-oxobutanoate + acetyl-CoA + H2O = (2S)-2-isopropylmalate + CoA + H(+). It participates in amino-acid biosynthesis; L-leucine biosynthesis; L-leucine from 3-methyl-2-oxobutanoate: step 1/4. Functionally, catalyzes the condensation of the acetyl group of acetyl-CoA with 3-methyl-2-oxobutanoate (2-ketoisovalerate) to form 3-carboxy-3-hydroxy-4-methylpentanoate (2-isopropylmalate). The chain is 2-isopropylmalate synthase from Escherichia coli O81 (strain ED1a).